A 185-amino-acid polypeptide reads, in one-letter code: Ribosome-recycling factor (185 aa).

Residues 138-179 show a composition bias toward basic and acidic residues; it reads TLKRQEKNGDITEDEQRSLEKQVQKVTDDATKEIDKLADQKS. A disordered region spans residues 138-185; that stretch reads TLKRQEKNGDITEDEQRSLEKQVQKVTDDATKEIDKLADQKSQEITQG.

Belongs to the RRF family.

The protein resides in the cytoplasm. Functionally, responsible for the release of ribosomes from messenger RNA at the termination of protein biosynthesis. May increase the efficiency of translation by recycling ribosomes from one round of translation to another. This is Ribosome-recycling factor from Lactobacillus gasseri (strain ATCC 33323 / DSM 20243 / BCRC 14619 / CIP 102991 / JCM 1131 / KCTC 3163 / NCIMB 11718 / NCTC 13722 / AM63).